We begin with the raw amino-acid sequence, 317 residues long: Putative carboxypeptidase RP402 (317 aa).

S125 serves as the catalytic Nucleophile. Residues E225 and H288 each act as charge relay system in the active site.

It belongs to the peptidase S66 family.

This chain is Putative carboxypeptidase RP402, found in Rickettsia prowazekii (strain Madrid E).